The primary structure comprises 436 residues: Methylenetetrahydrofolate--tRNA-(uracil-5-)-methyltransferase TrmFO (436 aa).

9-14 is an FAD binding site; that stretch reads GAGLAG.

Belongs to the MnmG family. TrmFO subfamily. FAD serves as cofactor.

The protein resides in the cytoplasm. It catalyses the reaction uridine(54) in tRNA + (6R)-5,10-methylene-5,6,7,8-tetrahydrofolate + NADH + H(+) = 5-methyluridine(54) in tRNA + (6S)-5,6,7,8-tetrahydrofolate + NAD(+). The enzyme catalyses uridine(54) in tRNA + (6R)-5,10-methylene-5,6,7,8-tetrahydrofolate + NADPH + H(+) = 5-methyluridine(54) in tRNA + (6S)-5,6,7,8-tetrahydrofolate + NADP(+). Catalyzes the folate-dependent formation of 5-methyl-uridine at position 54 (M-5-U54) in all tRNAs. The chain is Methylenetetrahydrofolate--tRNA-(uracil-5-)-methyltransferase TrmFO from Acetivibrio thermocellus (strain ATCC 27405 / DSM 1237 / JCM 9322 / NBRC 103400 / NCIMB 10682 / NRRL B-4536 / VPI 7372) (Clostridium thermocellum).